A 314-amino-acid chain; its full sequence is Vacuolar membrane protein FOSTERSO_4058 (314 aa).

Residues 32 to 59 are disordered; that stretch reads KPTSSVVSETSSKSLPSLTSSAFSTSSG. Residues 93–113 form a helical membrane-spanning segment; sequence VYIAVGAVIGAIFISILIWWL. A phosphoserine mark is found at Ser-148, Ser-254, and Ser-274. Residues 240–309 are disordered; the sequence is EERKLNLNRP…PSMFLDDVLN (70 aa). Residues 254 to 269 show a composition bias toward basic and acidic residues; the sequence is SPERKEKKINSMEGYH.

The protein belongs to the PRM5 family.

It is found in the vacuole membrane. In Saccharomyces cerevisiae (strain FostersO) (Baker's yeast), this protein is Vacuolar membrane protein FOSTERSO_4058.